The primary structure comprises 464 residues: Fumarate hydratase class II (464 aa).

Substrate is bound by residues 96–98 (SGT), 127–130 (HPND), 137–139 (SSN), and threonine 185. The active-site Proton donor/acceptor is the histidine 186. Serine 316 is an active-site residue. Residues serine 317 and 322-324 (KVN) each bind substrate.

It belongs to the class-II fumarase/aspartase family. Fumarase subfamily. Homotetramer.

The protein localises to the cytoplasm. The enzyme catalyses (S)-malate = fumarate + H2O. Its pathway is carbohydrate metabolism; tricarboxylic acid cycle; (S)-malate from fumarate: step 1/1. Its function is as follows. Involved in the TCA cycle. Catalyzes the stereospecific interconversion of fumarate to L-malate. The chain is Fumarate hydratase class II from Pseudomonas syringae pv. tomato (strain ATCC BAA-871 / DC3000).